Reading from the N-terminus, the 164-residue chain is uncharacterized protein (164 aa).

Residues 1–60 constitute a chloroplast transit peptide; the sequence is MERSASVGVNDGRFGGNQFYSPSFSSSSSSSSMRHVNYSCGSCGYELNLSSTNRITSTIG.

The protein localises to the plastid. It is found in the chloroplast. This is an uncharacterized protein from Arabidopsis thaliana (Mouse-ear cress).